The primary structure comprises 2362 residues: MAYLLRSVVTIIDVFYKYTKQDEECGTLSKDELKELLEKEFRPILKNPDDPDTVDVIMHMLDRDHDRRLDFTEFILMIFKLALACNKVLGKEYCKASGSKKHRRGHQHQEEESETEEEEETPRQKSGFRFSSWSEGEEHGHSSGGSRGPAKHRRGSNSKRLERQDELSSSEESRKKHHGSIFGHSWSSNKEKDGSRSEELGEKGDKSYDSPSRESEEEYESGYRLNHQGREGHSGLSCGLEKNKYELNYIQLRKGGEQKLGYNTSSSGNSKIQSHVYGFSNSSGCCRPKNASSSCQASRSQGQGNQSCRTQSNCQSGTSGGQGYGCVSEGQSSRCCQPKPRSCSQSSSQRGYGSKQCGQPQNCGRQQRMGSSHSSCCGPYGSGATQSSGCGQQRMSSCGHSSSSHQKGCSSNGFSKGDQRASGSGHSSCCEQHGTNSSQSSGFKQHGHESGQSCCGQHGTASSQSSGYSQHRVGSGQSCHYGQHGSSSGQSSSSGRHGSGSGQSSSSRHNRSGSSQSSGLEEHGSSSHQSHSSGHHGSGSRQSSGSEQHGAVSGQSSGSGKHETGPSQSSSSGHHGSGSQQHGGGSGQSTGFGEHESSSGHSSSSGQHRSGSRHSSGSGKHESGRSQSSGSGHHGSGSQQHGGGSGNSTGFGEHGSSSHPLPSSGQNESSSGQSSRSERHGTGSGQSSGFGQHGSGSHQSSSSGHNEYGSGQTSSSWPHGKGSGQESGYGEQESGHGQSSSSWQHGTGPGQSSSSEEEESRPGQSSSSWQHGKGSGQESGYGEQEAGHGQSSSSWQHGTGAGNQSSGYGEHKSGPSHSSRSWHHGTGSGQSLGFGQHGKGSHQSESSGHYESVSEPSSSSWQHGNGSGESYGYGEHESGHGQSSSAWNHGNESGQSNGYGEHESGHGQSSSAWNHGNESGQSNGFGENESGRDQEGYQQRESFHGQHRHPLSQHEQHSQFGYGRSPRSPVHPESSEGEEHSVVPRRYSGYGHGQGQAGHQQRESGYGQRGRPQGPSQDSSRQPQAGHGQPSQSGYGRSPRRSQVHPEYSEGEAHSEVSQRHSGSSHCHCHCHGQARHQQRESVHGQRGRPQGPSQDSSRHPQAGPGQPSQSGSRRSPRSQPVHPESSEGEEHSVVPQRHSGSGHGHGQGQGQAGHQQRESVHGQQGRPQGPSQDSSRQPQAGQGQPSQSGSGRSPRRSPVHPESSEGEEHSVVPQRHSGSGHGHGQGQGQGQAGHQQRESVHGQRSRPQGPFQDSSRQPQAGQGQPSQSGSGRSPRRSPVHPESSEGEEHSVVPQRHSGSGHGHGQGQGQAGHQQRESVHGQPVRPEVPTQDSSRQPQAGQGQPSQSGSGRSPRRSPVHPESSEGEEHSVVPQRNSESCHCHCHDQAGHQQRESVHGQRGRPQGPSQDSSRHPQAGPGQPSQSGSRRSPRSSPVHPESSEGEEHSVVPQRHSGSGHGHGQGQGQAGHQQRESVHGQRGRPQGPTQDSSRQPQAGQGQPSQSGSGRSPRRSPVHPESSEGEEHSVVPQRHSGSGHGHGHGQGQGQAGHQQRESVHGQRGRPQGPSQDSSRQPQAGQGQPSQSGSGRSPRRSPVHPESSEGEEHSVVPQRYSGSGHGHGQGQAGHQQRESVHGQRGRPQGPSQDSSRQPQAGQGQPSQSGSGRSPRRSPVHPESSEGEEHSVIPQRHSGSGHSHGQGQVHAEHQQRESVHGQRGRPQGPSQDSSRQPQAGQGQPSLSGSGRSPRRSPVHPESSEGEEHSVVPQRHSHSESGHGHGQGQGQAGHQQRESVHGQRGRPQGPSQDSSRQPQAGQGQPSQSGSGRSPGRSPVHPESSEGEEHSVVPQRHSESGHGHGQGQGQAGHQQRESVHGQRGRPQGPSQDSSRQPQAGQGQPSQSGSGRSPRRSPVHPESSEGEEHSVVPQRHSGSGHGHGQGQGQAGHQQRESVHGQPVRPQGPSQDSSSQPQASQGQPSQSGSGRSPRRSPVHPESSEGEEHSVVPQRHSGSGHGHGQGQGQAGHQQRESLHGQRGRSQSPFHPSHSIHWQSKCTISKKSSRLSGHYGRNHFQSTISGNQYDSSQSSRHGSYGPQDYDYGQSGYGPSGRLRSNSQSSIPFSSAHRATNMEVLPCGQSFSPSDHVGTKANEQIGELVFKYRESETGPDQSVDYYNLTESNSTTRGHECSHGHSVVVPEHSDDSDFNYGHSYNGKQQICQSQPTVQSCFDDSQYILFQKHLESPSFGNQSGFSPNERQLYTCNESIDSYHLSSDSNNRNQIYSSNNSFPNLYCIGTEQCIYLPSATILGEGTEGQEPGYTQPGTICKYNQFLDGRKSRTRGNHETGKMKSGSAYLDSNTPLYTYVQEQKSYYFE.

Positions M1 to L81 are S-100-like. EF-hand domains lie at V8–P43 and D49–A84. Ca(2+) contacts are provided by D62, D64, D66, R68, and E73. Disordered regions lie at residues A96–C238 and G284–P2109. A compositionally biased stretch (acidic residues) spans E111 to E120. Basic and acidic residues-rich tracts occupy residues K159 to R174 and N189 to E214. Filaggrin repeat units lie at residues G261–C308 and H373–F414. Polar residues-rich tracts occupy residues G284–G317, S342–S375, and G383–M395. Over residues S396–S411 the composition is skewed to low complexity. Polar residues-rich tracts occupy residues A421–F443 and S450–S469. 3 stretches are compositionally biased toward low complexity: residues G474–G519, G539–G550, and S567–Q580. The stretch at Q555 to Q607 is one Filaggrin 3 repeat. A compositionally biased stretch (gly residues) spans Q581–T590. The span at S599 to S618 shows a compositional bias: low complexity. Positions G632–E653 are enriched in gly residues. The segment covering H654–S675 has biased composition (low complexity). The stretch at G672–S723 is one Filaggrin 4 repeat. The segment covering T682–G694 has biased composition (gly residues). 3 stretches are compositionally biased toward low complexity: residues S695–H705, G728–S754, and G780–G798. Residues T826–G838 are compositionally biased toward gly residues. Residues S846–G864 are compositionally biased toward low complexity. The stretch at H880 to E927 is one Filaggrin 5 repeat. 2 stretches are compositionally biased toward polar residues: residues A886–S896 and A912–F925. Residues E973–V982 show a composition bias toward basic and acidic residues. The stretch at P984–Y1035 is one Filaggrin 6 repeat. Residues G1014–Y1035 are compositionally biased toward polar residues. Positions E1047–Q1059 are enriched in basic and acidic residues. Basic residues predominate over residues C1067–H1077. A compositionally biased stretch (low complexity) spans G1104–P1121. The span at S1142–Q1152 shows a compositional bias: gly residues. Over residues H1162–D1174 the composition is skewed to polar residues. The Filaggrin 7 repeat unit spans residues Q1165–H1210. The span at S1175–R1193 shows a compositional bias: low complexity. A phosphoserine mark is found at S1198, S1204, and S1205. Positions S1220–Q1232 are enriched in gly residues. Residues S1255–R1273 are compositionally biased toward low complexity. Phosphoserine occurs at positions 1278, 1284, and 1285. One copy of the Filaggrin 8 repeat lies at V1280–S1334. The segment covering S1300–Q1310 has biased composition (gly residues). Residues S1333 to R1351 show a composition bias toward low complexity. Residues S1356, S1362, and S1363 each carry the phosphoserine modification. The span at E1377–H1396 shows a compositional bias: basic and acidic residues. Positions P1413 to P1436 are enriched in low complexity. Phosphoserine occurs at positions 1438 and 1439. Gly residues predominate over residues S1454 to Q1464. One copy of the Filaggrin 9 repeat lies at H1474–H1522. Over residues S1487 to R1505 the composition is skewed to low complexity. A phosphoserine mark is found at S1510, S1516, and S1517. The span at S1532–Q1544 shows a compositional bias: gly residues. Low complexity predominate over residues S1567–R1585. Phosphoserine occurs at positions 1590, 1596, and 1597. Composition is skewed to low complexity over residues S1643–R1661 and Q1683–Q1696. Basic and acidic residues predominate over residues H1698–H1708. Residues R1723–H1756 form a Filaggrin 10 repeat. Positions Q1724–R1739 are enriched in low complexity. Phosphoserine is present on residues S1744, S1750, S1751, S1824, S1830, and S1831. The segment covering S1801–P1825 has biased composition (low complexity). The span at E1829 to H1848 shows a compositional bias: basic and acidic residues. Low complexity predominate over residues S1879–R1897. A phosphoserine mark is found at S1902, S1908, and S1909. Gly residues predominate over residues S1924–Q1934. Positions R1949 to R1975 are enriched in low complexity. Phosphoserine is present on residues S1980, S1986, and S1987. Gly residues predominate over residues S2002 to Q2012. One copy of the Filaggrin 11 repeat lies at Q2016–Q2070. Polar residues-rich tracts occupy residues G2026–K2048, H2061–H2079, and L2100–P2109. S2104 is subject to Phosphoserine. The stretch at D2218–L2259 is one Filaggrin 12 repeat.

This sequence belongs to the S100-fused protein family. It in the N-terminal section; belongs to the S-100 family. In terms of processing, deiminated by PADI1, PADI2 or PADI3 in vitro. The deiminated form is degraded by calpain-1/CAPN1 more quickly and into shorter peptides than the intact protein. May be processed by calpain-1/CAPN1.

It localises to the cytoplasm. It is found in the cytoplasmic granule. Essential for normal cell-cell adhesion in the cornified cell layers. Important for proper integrity and mechanical strength of the stratum corneum of the epidermis. This chain is Filaggrin-2 (Flg2), found in Mus musculus (Mouse).